The primary structure comprises 62 residues: Defensin BmKDfsin4 (62 aa).

A signal peptide spans 1–24 (MKTIVLLFVLALVFCTLEMGIVEA). 3 disulfides stabilise this stretch: C28-C49, C35-C57, and C39-C59.

It belongs to the invertebrate defensin family. Type 2 subfamily.

The protein resides in the secreted. In terms of biological role, dual-function peptide with antimicrobial and potassium channel-blocking activities. Shows inhibitory activity against Gram-positive bacteria such as S.aureus, B.subtilis, and M.luteus as well as methicillin-resistant S.aureus (MIC=0.1-20 uM). Does not act on bacteria by disrupting membranes. Also moderately inhibits Kv1.1/KCNA1 (25.2% inhibition at 1 uM), Kv1.2/KCNA2 (30.5% inhibition at 1 uM), and Kv1.3/KCNA3 potassium channels (IC(50)=510.2 nM, 61% inhibition at 1 uM). Inhibits potassium channels by interacting with the pore region. Does not show hemolytic activity. In vitro, dose-dependently decreases the production of Hepatitis B virus (HBV) DNA and HBV viral proteins in both culture medium and cell lysate. The polypeptide is Defensin BmKDfsin4 (Olivierus martensii (Manchurian scorpion)).